Reading from the N-terminus, the 108-residue chain is uncharacterized protein (108 aa).

This is an uncharacterized protein from Methanocaldococcus jannaschii (strain ATCC 43067 / DSM 2661 / JAL-1 / JCM 10045 / NBRC 100440) (Methanococcus jannaschii).